A 468-amino-acid chain; its full sequence is UDP-N-acetylmuramate--L-alanine ligase (468 aa).

112-118 lines the ATP pocket; sequence GTHGKTT.

The protein belongs to the MurCDEF family.

The protein resides in the cytoplasm. The enzyme catalyses UDP-N-acetyl-alpha-D-muramate + L-alanine + ATP = UDP-N-acetyl-alpha-D-muramoyl-L-alanine + ADP + phosphate + H(+). It functions in the pathway cell wall biogenesis; peptidoglycan biosynthesis. Cell wall formation. This Bordetella bronchiseptica (strain ATCC BAA-588 / NCTC 13252 / RB50) (Alcaligenes bronchisepticus) protein is UDP-N-acetylmuramate--L-alanine ligase.